Reading from the N-terminus, the 239-residue chain is Probable transcriptional regulatory protein BLi00754/BL02339 (239 aa).

Belongs to the TACO1 family. YeeN subfamily.

The protein resides in the cytoplasm. The protein is Probable transcriptional regulatory protein BLi00754/BL02339 of Bacillus licheniformis (strain ATCC 14580 / DSM 13 / JCM 2505 / CCUG 7422 / NBRC 12200 / NCIMB 9375 / NCTC 10341 / NRRL NRS-1264 / Gibson 46).